The chain runs to 256 residues: Ribonuclease HII (256 aa).

The 185-residue stretch at 72 to 256 (QYIAGMDEVG…SFNPVPKYLN (185 aa)) folds into the RNase H type-2 domain. A divalent metal cation-binding residues include Asp78, Glu79, and Asp170.

It belongs to the RNase HII family. Mn(2+) is required as a cofactor. The cofactor is Mg(2+).

It localises to the cytoplasm. It carries out the reaction Endonucleolytic cleavage to 5'-phosphomonoester.. Functionally, endonuclease that specifically degrades the RNA of RNA-DNA hybrids. This is Ribonuclease HII from Limosilactobacillus reuteri (strain DSM 20016) (Lactobacillus reuteri).